The chain runs to 371 residues: Queuine tRNA-ribosyltransferase (371 aa).

The active-site Nucleophile is Asp-90. Asp-90 acts as the Proton acceptor in catalysis. Substrate is bound by residues 90–94, Ser-91, Asp-144, Gln-189, and Gly-215; that span reads DSGGF. The segment at 246–252 is RNA binding; it reads GVGTPEN. Catalysis depends on Asp-265, which acts as the Nucleophile. Residues 270-274 are RNA binding; important for wobble base 34 recognition; the sequence is TRNAR. The Zn(2+) site is built by Cys-303, Cys-305, Cys-308, and His-334.

The protein belongs to the queuine tRNA-ribosyltransferase family. As to quaternary structure, homodimer. Within each dimer, one monomer is responsible for RNA recognition and catalysis, while the other monomer binds to the replacement base PreQ1. Requires Zn(2+) as cofactor.

It carries out the reaction 7-aminomethyl-7-carbaguanine + guanosine(34) in tRNA = 7-aminomethyl-7-carbaguanosine(34) in tRNA + guanine. It functions in the pathway tRNA modification; tRNA-queuosine biosynthesis. In terms of biological role, catalyzes the base-exchange of a guanine (G) residue with the queuine precursor 7-aminomethyl-7-deazaguanine (PreQ1) at position 34 (anticodon wobble position) in tRNAs with GU(N) anticodons (tRNA-Asp, -Asn, -His and -Tyr). Catalysis occurs through a double-displacement mechanism. The nucleophile active site attacks the C1' of nucleotide 34 to detach the guanine base from the RNA, forming a covalent enzyme-RNA intermediate. The proton acceptor active site deprotonates the incoming PreQ1, allowing a nucleophilic attack on the C1' of the ribose to form the product. After dissociation, two additional enzymatic reactions on the tRNA convert PreQ1 to queuine (Q), resulting in the hypermodified nucleoside queuosine (7-(((4,5-cis-dihydroxy-2-cyclopenten-1-yl)amino)methyl)-7-deazaguanosine). The protein is Queuine tRNA-ribosyltransferase of Helicobacter pylori (strain ATCC 700392 / 26695) (Campylobacter pylori).